The sequence spans 335 residues: MSPKISLTRYLVEQQRIDGHIPPELRLLIEVVARACKSISQAVNKGALGDVMGSAGSENVQGEIQKKLDIIANEVLIEANEWGGHLAAMASEEMDDIYVVPNRYPQGEYLLMFDPLDGSSNIDVNVSIGTIFSVLKKSEDDRGVEESDFLQAGNQQVAAGYCVYGPQTTLVLTVGDGVAMFTLDREQGSFVLTEENVTIPDDTQEFAINMSNMRHWDEPVKRYINECLEGKDGPRGKDFNMRWIASMVADVHRILCRGGVFLYPWDKREPEKAGKLRLMYEANPMSWLIEQAGGAATNGKQRILDIQPTKLHERVSVILGSKNEVERLTAYHSGL.

Mg(2+) is bound by residues E92, D114, L116, and D117. Substrate is bound by residues D117 to S120, N209, and K275. Mg(2+) is bound at residue E281.

This sequence belongs to the FBPase class 1 family. In terms of assembly, homotetramer. Requires Mg(2+) as cofactor.

It localises to the cytoplasm. It carries out the reaction beta-D-fructose 1,6-bisphosphate + H2O = beta-D-fructose 6-phosphate + phosphate. The protein operates within carbohydrate biosynthesis; gluconeogenesis. The protein is Fructose-1,6-bisphosphatase class 1 1 of Polaromonas naphthalenivorans (strain CJ2).